Reading from the N-terminus, the 492-residue chain is Spindle assembly abnormal protein 6 (492 aa).

The PISA domain occupies 46-98; sequence SGEKELKFEISRSDDFEFLFSETLNNEKYQILARDHDLTVDFDAFPKVIIQHL. The stretch at 192–407 forms a coiled coil; it reads KSADELASLR…KIAHYRAQRF (216 aa).

In terms of assembly, nine homodimers form a cartwheel structure with an internal diameter of 23 nM and radial spokes connecting to the microtubule triplets. Interacts with sas-5.

It localises to the cytoplasm. It is found in the cytoskeleton. The protein localises to the microtubule organizing center. Its subcellular location is the centrosome. The protein resides in the centriole. Functionally, central scaffolding component of the centrioles ensuring their 9-fold symmetry. Required for centrosome biogenesis and duplication. This is Spindle assembly abnormal protein 6 from Caenorhabditis elegans.